Consider the following 591-residue polypeptide: L-fucose isomerase (591 aa).

Catalysis depends on proton acceptor residues glutamate 337 and aspartate 361. The Mn(2+) site is built by glutamate 337, aspartate 361, and histidine 528.

Belongs to the L-fucose isomerase family. As to quaternary structure, homohexamer. Mn(2+) is required as a cofactor.

It is found in the cytoplasm. It catalyses the reaction L-fucose = L-fuculose. The protein operates within carbohydrate degradation; L-fucose degradation; L-lactaldehyde and glycerone phosphate from L-fucose: step 1/3. In terms of biological role, converts the aldose L-fucose into the corresponding ketose L-fuculose. This chain is L-fucose isomerase, found in Escherichia coli (strain SE11).